The following is a 1142-amino-acid chain: Protein lin-25 (1142 aa).

Positions 600–613 (IEEEIEEEEEDIEP) are enriched in acidic residues. The disordered stretch occupies residues 600–706 (IEEEIEEEEE…EKPKEPLEPT (107 aa)). Composition is skewed to basic and acidic residues over residues 614 to 627 (EVVK…TEKE), 652 to 662 (DEQKTEEKMDT), and 679 to 703 (DPPK…KEPL).

The protein localises to the nucleus. The protein resides in the cytoplasm. In terms of biological role, participates in the inductive signaling pathway downstream of let-60 Ras and the RAF/MAP kinase cascade to regulate specification and differentiation of many cell types. Positively regulates the fate of vulval precursor cells. Required for induction of the P12 and excretory duct cell fates. In males, it is also required for proper formation of spicules. Does not function in the signaling pathway that promotes exit from pachytene. This is Protein lin-25 from Caenorhabditis briggsae.